The following is a 339-amino-acid chain: MAHVAEWKKKEVEELTNIIKSYPVIALVDVANVPAYPLSKMREKLRGKALLRVSRNTLIELAIKRAAQELGKPELEKLIDHIQGGAGILATEMNPFKLYKLLEESKTPAPAKPGVPVPRDVVIPAGPTSISPGPLVGEMQALGIPARIEKGKVSIQKDYTVLKAGEVITEQLARILNALGIEPLEVGLNLLAAYEDGIVYTPEVLAIDEEEYINLLQQAYMHAFNLSVNTAYPTSQTIEAIIQKAYLGAKNVAVEAGYITPETVEDIFGRALRAVLLIAQNLPEELLDEKTKELLNQQAQIAVATQPQQEEKVEEAEEEEEEEEASEEDALAGLGALFG.

The segment at 305 to 339 (TQPQQEEKVEEAEEEEEEEEASEEDALAGLGALFG) is disordered. The span at 312–330 (KVEEAEEEEEEEEASEEDA) shows a compositional bias: acidic residues.

This sequence belongs to the universal ribosomal protein uL10 family. In terms of assembly, part of the 50S ribosomal subunit. Forms part of the ribosomal stalk which helps the ribosome interact with GTP-bound translation factors. Forms a heptameric L10(L12)2(L12)2(L12)2 complex, where L10 forms an elongated spine to which the L12 dimers bind in a sequential fashion.

Its function is as follows. Forms part of the ribosomal stalk, playing a central role in the interaction of the ribosome with GTP-bound translation factors. This Thermococcus onnurineus (strain NA1) protein is Large ribosomal subunit protein uL10.